A 91-amino-acid chain; its full sequence is Long neurotoxin OH-56 (91 aa).

A signal peptide spans 1 to 21 (MKTLLLTLVVVTIMCLDLGYT). Disulfide bonds link cysteine 24–cysteine 42, cysteine 35–cysteine 63, cysteine 48–cysteine 52, cysteine 67–cysteine 78, and cysteine 79–cysteine 84.

The protein belongs to the three-finger toxin family. Long-chain subfamily. Type II alpha-neurotoxin sub-subfamily. In terms of tissue distribution, expressed by the venom gland.

The protein localises to the secreted. Its function is as follows. Binds with high affinity to muscular (alpha-1/CHRNA1) and neuronal (alpha-7/CHRNA7) nicotinic acetylcholine receptor (nAChR) and inhibits acetylcholine from binding to the receptor, thereby impairing neuromuscular and neuronal transmission. The sequence is that of Long neurotoxin OH-56 from Ophiophagus hannah (King cobra).